A 275-amino-acid polypeptide reads, in one-letter code: NH(3)-dependent NAD(+) synthetase (275 aa).

46 to 53 contacts ATP; the sequence is GISGGQDS. Asp-52 contributes to the Mg(2+) binding site. Arg-140 is a binding site for deamido-NAD(+). Thr-160 contributes to the ATP binding site. Glu-165 is a binding site for Mg(2+). Deamido-NAD(+)-binding residues include Lys-173 and Asp-180. 2 residues coordinate ATP: Lys-189 and Thr-211. A deamido-NAD(+)-binding site is contributed by 260 to 261; that stretch reads HK.

Belongs to the NAD synthetase family. Homodimer.

It catalyses the reaction deamido-NAD(+) + NH4(+) + ATP = AMP + diphosphate + NAD(+) + H(+). It functions in the pathway cofactor biosynthesis; NAD(+) biosynthesis; NAD(+) from deamido-NAD(+) (ammonia route): step 1/1. Functionally, catalyzes the ATP-dependent amidation of deamido-NAD to form NAD. Uses ammonia as a nitrogen source. This chain is NH(3)-dependent NAD(+) synthetase, found in Escherichia coli O127:H6 (strain E2348/69 / EPEC).